Reading from the N-terminus, the 510-residue chain is Maturase K (510 aa).

The protein belongs to the intron maturase 2 family. MatK subfamily.

Its subcellular location is the plastid. It localises to the chloroplast. Usually encoded in the trnK tRNA gene intron. Probably assists in splicing its own and other chloroplast group II introns. The chain is Maturase K from Anomochloa marantoidea (Herbaceous bamboo).